An 843-amino-acid chain; its full sequence is MSSAMLVTCLPDPSSSFREDAPRPPVPGEEGETPPCQPGVGKGQVTKPMPVSSNTRRNEDGLGEPEGRASPDSPLTRWTKSLHSLLGDQDGAYLFRTFLEREKCVDTLDFWFACNGFRQMNLKDTKTLRVAKAIYKRYIENNSIVSKQLKPATKTYIRDGIKKQQIDSIMFDQAQTEIQSVMEENAYQMFLTSDIYLEYVRSGGENTAYMSNGGLGSLKVVCGYLPTLNEEEEWTCADFKCKLSPTVVGLSSKTLRATASVRSTETVDSGYRSFKRSDPVNPYHIGSGYVFAPATSANDSEISSDALTDDSMSMTDSSVDGIPPYRVGSKKQLQREMHRSVKANGQVSLPHFPRTHRLPKEMTPVEPATFAAELISRLEKLKLELESRHSLEERLQQIREDEEREGSELTLNSREGAPTQHPLSLLPSGSYEEDPQTILDDHLSRVLKTPGCQSPGVGRYSPRSRSPDHHHHHHSQYHSLLPPGGKLPPAAASPGACPLLGGKGFVTKQTTKHVHHHYIHHHAVPKTKEEIEAEATQRVHCFCPGGSEYYCYSKCKSHSKAPETMPSEQFGGSRGSTLPKRNGKGTEPGLALPAREGGAPGGAGALQLPREEGDRSQDVWQWMLESERQSKPKPHSAQSTKKAYPLESARSSPGERASRHHLWGGNSGHPRTTPRAHLFTQDPAMPPLTPPNTLAQLEEACRRLAEVSKPPKQRCCVASQQRDRNHSATVQTGATPFSNPSLAPEDHKEPKKLAGVHALQASELVVTYFFCGEEIPYRRMLKAQSLTLGHFKEQLSKKGNYRYYFKKASDEFACGAVFEEIWEDETVLPMYEGRILGKVERID.

The disordered stretch occupies residues 1–75 (MSSAMLVTCL…EGRASPDSPL (75 aa)). The Tankyrase-binding motif signature appears at 21–30 (APRPPVPGEE). Residues 56-69 (RRNEDGLGEPEGRA) show a composition bias toward basic and acidic residues. The RGS domain maps to 81–200 (SLHSLLGDQD…LTSDIYLEYV (120 aa)). The segment at 327 to 413 (VGSKKQLQRE…REGSELTLNS (87 aa)) is interaction with GSK3B. The tract at residues 334-393 (QREMHRSVKANGQVSLPHFPRTHRLPKEMTPVEPATFAAELISRLEKLKLELESRHSLEE) is interaction with SIAH1 and SIAH2. 4 disordered regions span residues 396 to 435 (QQIREDEEREGSELTLNSREGAPTQHPLSLLPSGSYEEDP), 447 to 494 (LKTP…AASP), 561 to 674 (APET…RTTP), and 718 to 748 (ASQQRDRNHSATVQTGATPFSNPSLAPEDHK). An interaction with beta-catenin region spans residues 413-476 (SREGAPTQHP…PDHHHHHHSQ (64 aa)). 2 stretches are compositionally biased toward low complexity: residues 477–494 (YHSLLPPGGKLPPAAASP) and 588–597 (PGLALPAREG). Polar residues predominate over residues 727-741 (SATVQTGATPFSNPS). The region spanning 761–843 (ASELVVTYFF…RILGKVERID (83 aa)) is the DIX domain.

In terms of assembly, interacts with glycogen synthase kinase-3 beta (GSK3B) and beta-catenin. The interaction between axin and beta-catenin occurs via the armadillo repeats contained in beta-catenin. Interacts with SMAD7 and RNF111. Interacts with ANKRD6. Interacts with SIAH1. Interacts with SIAH2. In terms of processing, probably phosphorylated by GSK3B and dephosphorylated by PP2A. ADP-ribosylated by tankyrase TNKS and TNKS2. Poly-ADP-ribosylated protein is recognized by RNF146, followed by ubiquitination and subsequent activation of the Wnt signaling pathway. Post-translationally, ubiquitinated by RNF146 when poly-ADP-ribosylated, leading to its degradation and subsequent activation of the Wnt signaling pathway. Deubiquitinated by USP34, deubiquitinated downstream of beta-catenin stabilization step: deubiquitination is important Wnt signaling to positively regulate beta-catenin (CTNBB1)-mediated transcription. Expressed in brain and lymphoblast.

Its subcellular location is the cytoplasm. Inhibitor of the Wnt signaling pathway. Down-regulates beta-catenin. Probably facilitate the phosphorylation of beta-catenin and APC by GSK3B. In Homo sapiens (Human), this protein is Axin-2 (AXIN2).